A 304-amino-acid polypeptide reads, in one-letter code: Methionyl-tRNA formyltransferase (304 aa).

Residue 106-109 (SLLP) participates in (6S)-5,6,7,8-tetrahydrofolate binding.

Belongs to the Fmt family.

The enzyme catalyses L-methionyl-tRNA(fMet) + (6R)-10-formyltetrahydrofolate = N-formyl-L-methionyl-tRNA(fMet) + (6S)-5,6,7,8-tetrahydrofolate + H(+). Attaches a formyl group to the free amino group of methionyl-tRNA(fMet). The formyl group appears to play a dual role in the initiator identity of N-formylmethionyl-tRNA by promoting its recognition by IF2 and preventing the misappropriation of this tRNA by the elongation apparatus. The sequence is that of Methionyl-tRNA formyltransferase from Thermosipho africanus (strain TCF52B).